The sequence spans 304 residues: Lipid droplet-associated hydrolase (304 aa).

Ser-119 functions as the Nucleophile in the catalytic mechanism. Catalysis depends on charge relay system residues Asp-250 and His-279.

The protein belongs to the AB hydrolase superfamily. LDAH family.

Its subcellular location is the lipid droplet. It carries out the reaction a cholesterol ester + H2O = cholesterol + a fatty acid + H(+). Its function is as follows. Probable serine lipid hydrolase associated with lipid droplets. Has low cholesterol esterase activity. Appears to lack triglyceride lipase activity. Involved in cholesterol and triglyceride homeostasis; stimulates cellular triglyceride accumulation and cellular cholesterol release. This Dictyostelium discoideum (Social amoeba) protein is Lipid droplet-associated hydrolase.